The chain runs to 66 residues: Potassium channel toxin alpha-KTx 30.1 (66 aa).

Positions 1–24 (MNTGFFFFVIMATGLVLTFDTIHA) are cleaved as a signal peptide. Intrachain disulfides connect cysteine 30-cysteine 50, cysteine 36-cysteine 55, and cysteine 40-cysteine 57.

This sequence belongs to the short scorpion toxin superfamily. Potassium channel inhibitor family. Alpha-KTx 30 subfamily. As to expression, expressed by the venom gland.

Its subcellular location is the secreted. Functionally, inhibits Kv1.3/KCNA3 channel (1 uM of the toxin inhibits currents by 64.1%). The chain is Potassium channel toxin alpha-KTx 30.1 from Scorpiops margerisonae (Scorpion).